Consider the following 388-residue polypeptide: Chorismate synthase (388 aa).

NADP(+) contacts are provided by arginine 39 and arginine 45. FMN-binding positions include 130–132 (RSS), 251–252 (NA), glycine 296, 311–315 (KPIPT), and arginine 337.

It belongs to the chorismate synthase family. Homotetramer. Requires FMNH2 as cofactor.

The catalysed reaction is 5-O-(1-carboxyvinyl)-3-phosphoshikimate = chorismate + phosphate. The protein operates within metabolic intermediate biosynthesis; chorismate biosynthesis; chorismate from D-erythrose 4-phosphate and phosphoenolpyruvate: step 7/7. Functionally, catalyzes the anti-1,4-elimination of the C-3 phosphate and the C-6 proR hydrogen from 5-enolpyruvylshikimate-3-phosphate (EPSP) to yield chorismate, which is the branch point compound that serves as the starting substrate for the three terminal pathways of aromatic amino acid biosynthesis. This reaction introduces a second double bond into the aromatic ring system. The chain is Chorismate synthase from Streptococcus agalactiae serotype Ia (strain ATCC 27591 / A909 / CDC SS700).